The following is a 662-amino-acid chain: Protein translocase subunit SecA 2 (662 aa).

Residues Gln110, Gly128–Thr132, and Asp538 contribute to the ATP site.

It belongs to the SecA family. As to quaternary structure, monomer and homodimer. Part of the essential Sec protein translocation apparatus which comprises SecA, SecYEG and auxiliary proteins SecDF. Other proteins may also be involved.

It is found in the cell inner membrane. The protein resides in the cytoplasm. It carries out the reaction ATP + H2O + cellular proteinSide 1 = ADP + phosphate + cellular proteinSide 2.. Functionally, part of the Sec protein translocase complex. Interacts with the SecYEG preprotein conducting channel. Has a central role in coupling the hydrolysis of ATP to the transfer of proteins into and across the cell membrane, serving as an ATP-driven molecular motor driving the stepwise translocation of polypeptide chains across the membrane. The protein is Protein translocase subunit SecA 2 of Chlorobium chlorochromatii (strain CaD3).